We begin with the raw amino-acid sequence, 267 residues long: 3-methyl-2-oxobutanoate hydroxymethyltransferase (267 aa).

Positions 45 and 84 each coordinate Mg(2+). 3-methyl-2-oxobutanoate is bound by residues 45–46, D84, and K113; that span reads DS. E115 lines the Mg(2+) pocket. E182 serves as the catalytic Proton acceptor.

Belongs to the PanB family. As to quaternary structure, homodecamer; pentamer of dimers. Mg(2+) serves as cofactor.

The protein resides in the cytoplasm. The catalysed reaction is 3-methyl-2-oxobutanoate + (6R)-5,10-methylene-5,6,7,8-tetrahydrofolate + H2O = 2-dehydropantoate + (6S)-5,6,7,8-tetrahydrofolate. The protein operates within cofactor biosynthesis; coenzyme A biosynthesis. In terms of biological role, catalyzes the reversible reaction in which hydroxymethyl group from 5,10-methylenetetrahydrofolate is transferred onto alpha-ketoisovalerate to form ketopantoate. The chain is 3-methyl-2-oxobutanoate hydroxymethyltransferase from Sulfurisphaera tokodaii (strain DSM 16993 / JCM 10545 / NBRC 100140 / 7) (Sulfolobus tokodaii).